The chain runs to 354 residues: tRNA N6-adenosine threonylcarbamoyltransferase (354 aa).

Fe cation contacts are provided by histidine 111 and histidine 115. Substrate contacts are provided by residues 134 to 138, aspartate 167, glycine 180, and asparagine 279; that span reads LVSGG. Aspartate 319 contacts Fe cation.

Belongs to the KAE1 / TsaD family. Requires Fe(2+) as cofactor.

Its subcellular location is the cytoplasm. It carries out the reaction L-threonylcarbamoyladenylate + adenosine(37) in tRNA = N(6)-L-threonylcarbamoyladenosine(37) in tRNA + AMP + H(+). In terms of biological role, required for the formation of a threonylcarbamoyl group on adenosine at position 37 (t(6)A37) in tRNAs that read codons beginning with adenine. Is involved in the transfer of the threonylcarbamoyl moiety of threonylcarbamoyl-AMP (TC-AMP) to the N6 group of A37, together with TsaE and TsaB. TsaD likely plays a direct catalytic role in this reaction. This chain is tRNA N6-adenosine threonylcarbamoyltransferase, found in Neisseria meningitidis serogroup B (strain ATCC BAA-335 / MC58).